The chain runs to 1487 residues: MIERGKYQSLTMVNWNGFFARTFDIDGLVTTLSGGNGAGKSTTMAAFITALIPDQTLLHFRNTTEAGSSQSSRDKGLYGKLQPGACYAALDVVNSRNQRLLFAVKLQQVAGRDKKVDIKPFVIQGLPSHVKPTDILVESVSATQARVRQINEVKDAIAEFEGVQFKAFSSIVDYHAQMFEFGVIPKKLRNSSDRSKFYRLIEASLYGGISSAITRSLRDYLLPQNGGVKKAFQDMESALRENRMTLEAIKTTQADRDLFKHLITESTNYVAADYMRHANDRRNKLEQTLSLRSELFGSRETLIEQNNLLNRVQEELELLIESESALEQDYQAASDHLQLVQNALRQQEKIERYQEDLEELSERLEEQMMVVEEAQERVMMVEEQATVAEEEVDSLKTQLADYQQALDVQQTRALQYQQAVQALEKAKQLLGDDCLTAESAQALVSELKNKESESTNALLSVKHKLDMSSAAAEQFETALKLVQSIVGQVERKDAAEQAKIVITKARESQQIAQNEQQWRAQHRDLERSLNQQRQARELVKEYQKQFHVELTDEITFEQERERHAMQIETLEMTQEELREQRSEQRRLEQDAAAEINKLEAIAPTWIAANDALEKLREQSGVDLEDRHAVMSHMQVVLEQEKELSLAKDKLAERRSQLESEIERLASPGGSNDPRLKGLADTLGGVLLSEIYDDITIDDAPYFSAMYGPARHAIVVSDLSGIEEKLVELDDCPEDLYIIEGDIDAFDDSSFDAEELEGAVCVRMNDRQMRYSRFPEIPLFGRAAREQRLELLRNEREEVVEKHAKAAFDSQKMQRLYQAFNQFVANHIQVAFEADPEQALANVREKRGQIARVLADLEAKEQQHRSQLQTSKQALSSLDKLAPNMALIEDDTLQARFDELEEKIAQLSEAKAFLNNHAKAVAELEKIASALDADPEQFDALEAEYKAADEQLQELKKQIFALSDLVERRHYFAYSDSVDLLNQSSELSEQLKAKLVQAEQMRTRSREELKQAQGQMNQYNQVLASLKSSHQAKLETVQEFKQELQEFGVNADEGAEERAIRRRDELHERLHTSRSRKSEYERTITSTELEMKGLAKRLKKVQKEYAELRTFVVAAKAGWCSVLRLARENDVERRLHKRELAYMSADELRSMSDKSLGALRLAVANNDDLRDALRLSEDNARPERKVLFYIAVYQHLRERIRQDIIRTDDPVEAIEEMEVELARLTEELTQRENRLAISSESVASIIKKTIQREQNRIRMLNQGLSNISFGQVKGVRLNVKIRESHEVLLHGLSSQQEQHKDLFESPRFTFSEAMAKLFQRVNPHIDMGQRSPQVLGEELLDYRNYLELSVEVNRGSDGWLQAESGALSTGEAIGTGQSILLMVVQSWEEESRRLRSKDIIPCRLLFLDEAARLDAKSISTLFELCDRLDMQLLIAAPENISPEKGTTYKLVRKVFKDHEHVHVVGLRGFGQTDKPKSEVQEMIEEFES.

G34–S41 contacts ATP. Coiled coils occupy residues G297–L458, R506–I601, L637–S666, R781–A806, E836–T1109, and V1210–I1266. A flexible hinge region spans residues P667 to R784.

Belongs to the SMC family. MukB subfamily. As to quaternary structure, homodimerization via its hinge domain. Binds to DNA via its C-terminal region. Interacts, and probably forms a ternary complex, with MukE and MukF via its C-terminal region. The complex formation is stimulated by calcium or magnesium. Interacts with tubulin-related protein FtsZ.

It is found in the cytoplasm. Its subcellular location is the nucleoid. In terms of biological role, plays a central role in chromosome condensation, segregation and cell cycle progression. Functions as a homodimer, which is essential for chromosome partition. Involved in negative DNA supercoiling in vivo, and by this means organize and compact chromosomes. May achieve or facilitate chromosome segregation by condensation DNA from both sides of a centrally located replisome during cell division. The sequence is that of Chromosome partition protein MukB from Vibrio parahaemolyticus serotype O3:K6 (strain RIMD 2210633).